Here is a 397-residue protein sequence, read N- to C-terminus: Lysophospholipid transporter LplT (397 aa).

Residues 1–17 (MSESVHTNTSLWSKGMK) are Periplasmic-facing. A helical transmembrane segment spans residues 18-38 (AVIVAQFLSAFGDNALLFATL). Over 39–52 (ALLKAQFYPEWSQP) the chain is Cytoplasmic. A helical membrane pass occupies residues 53-73 (ILQMVFVGAYILFAPFVGQVA). The Periplasmic portion of the chain corresponds to 74-90 (DSFAKGRVMMFANGLKL). A helical membrane pass occupies residues 91 to 111 (LGAASICFGINPFLGYTLVGV). The Cytoplasmic portion of the chain corresponds to 112–144 (GAAAYSPAKYGILGELTTGSKLVKANGLMEAST). A helical transmembrane segment spans residues 145–165 (IAAILLGSVAGGVLADWHILV). Position 166 (alanine 166) is a topological domain, periplasmic. Residues 167 to 187 (LAACALAYGGAVVANIYIPKL) traverse the membrane as a helical segment. At 188 to 226 (AAARPGQSWNLISMTRSFLNACTSLWRNGETRFSLVGTS) the chain is on the cytoplasmic side. The chain crosses the membrane as a helical span at residues 227–247 (LFWGAGVTLRFLLVLWVPVAL). The Periplasmic segment spans residues 248–256 (GITDNATPT). Residues 257-277 (YLNAMVAIGIVVGAGAAAKLV) form a helical membrane-spanning segment. The Cytoplasmic segment spans residues 278–280 (TLE). A helical transmembrane segment spans residues 281 to 301 (TVSRCMPAGILIGVVVLIFSL). The Periplasmic portion of the chain corresponds to 302–304 (QHE). Residues 305–325 (LLPAYALLMLIGVLGGFFVVP) traverse the membrane as a helical segment. Topologically, residues 326–343 (LNALLQERGKKSVGAGNA) are cytoplasmic. A helical membrane pass occupies residues 344–364 (IAVQNLGENSAMLLMLGIYSL). The Periplasmic portion of the chain corresponds to 365-366 (AV). Residues 367-387 (MVGIPVVPIGIGFGALFALAI) traverse the membrane as a helical segment. Over 388–397 (TALWIWQRRH) the chain is Cytoplasmic.

Belongs to the major facilitator superfamily. LplT (TC 2.A.1.42) family.

It localises to the cell inner membrane. Catalyzes the facilitated diffusion of 2-acyl-glycero-3-phosphoethanolamine (2-acyl-GPE) into the cell. This Escherichia coli O6:K15:H31 (strain 536 / UPEC) protein is Lysophospholipid transporter LplT.